We begin with the raw amino-acid sequence, 146 residues long: MGFTEKQEALVNSSWELFKQNPGNSVLFYTIILEKAPAAKGMFSFLKDTAGVQDSPKLQSHAEKVFGMVRDSAVQLRATGGVVLGDATLGAIHIQKGVVDPHFVVVKEALLKTIKEVSGDKWSEELSTAWEVAYDALAAAIKKAMG.

Residues 2 to 146 form the Globin domain; that stretch reads GFTEKQEALV…LAAAIKKAMG (145 aa). Y29 is modified (nitrated tyrosine). A heme b-binding site is contributed by S44. Residue S44 is modified to Phosphoserine. Residue H61 coordinates O2. Heme b is bound by residues K64, H93, and K96. Y134 is modified (nitrated tyrosine).

It belongs to the plant globin family. In terms of assembly, monomer. Nitrated in effective nodules and particularly in hypoxic conditions; this mechanism may play a protective role in the symbiosis by buffering toxic peroxynitrite NO(2)(-). Nitration level decrease during nodule senescence. Post-translationally, phosphorylation at Ser-44 disrupts the molecular environment of its porphyrin ring oxygen binding pocket, thus leading to a reduced oxygen consumption and to the delivery of oxygen O(2) to symbiosomes. Root nodules.

The protein localises to the cytoplasm. The protein resides in the cytosol. It localises to the nucleus. Leghemoglobin that reversibly binds oxygen O(2) through a pentacoordinated heme iron. In root nodules, facilitates the diffusion of oxygen to the bacteroids while preventing the bacterial nitrogenase from being inactivated by buffering dioxygen, nitric oxide and carbon monoxide, and promoting the formation of reactive oxygen species (ROS, e.g. H(2)O(2)). This role is essential for symbiotic nitrogen fixation (SNF). This is Leghemoglobin 1 from Medicago truncatula (Barrel medic).